A 648-amino-acid chain; its full sequence is Threonine--tRNA ligase (648 aa).

One can recognise a TGS domain in the interval 1 to 61; that stretch reads MIDIILPDGS…INTATVKAIT (61 aa). Positions 243–549 are catalytic; that stretch reads DHRKLGRELE…LIEHYSGRLP (307 aa). Positions 349, 400, and 526 each coordinate Zn(2+).

The protein belongs to the class-II aminoacyl-tRNA synthetase family. In terms of assembly, homodimer. It depends on Zn(2+) as a cofactor.

The protein resides in the cytoplasm. It catalyses the reaction tRNA(Thr) + L-threonine + ATP = L-threonyl-tRNA(Thr) + AMP + diphosphate + H(+). Functionally, catalyzes the attachment of threonine to tRNA(Thr) in a two-step reaction: L-threonine is first activated by ATP to form Thr-AMP and then transferred to the acceptor end of tRNA(Thr). Also edits incorrectly charged L-seryl-tRNA(Thr). This chain is Threonine--tRNA ligase, found in Orientia tsutsugamushi (strain Boryong) (Rickettsia tsutsugamushi).